The chain runs to 491 residues: Regulatory protein NPR5 (491 aa).

One can recognise a BTB domain in the interval 26–116 (SDVTFSVEGR…LYSGQVSIVP (91 aa)). The segment at 122-136 (RPNCGERGCWHTHCS) adopts a C2HC NPR-type zinc-finger fold. 4 residues coordinate Zn(2+): cysteine 125, cysteine 130, histidine 132, and cysteine 135. ANK repeat units follow at residues 254-283 (QKIRRMRRALDSSDVELVKLMVMGEGLNLD), 284-313 (ESLALHYAVESCSREVVKALLELGAADVNY), 318-347 (AGKTPLHIAAEMVSPDMVAVLLDHHADPNV), and 351-385 (GGITPLDILRTLTSDFLFKGAVPGLTHIEPNKLRL). A disordered region spans residues 400 to 491 (EEGNNSNNQN…MYHHHHQHHF (92 aa)). Residues 403 to 413 (NNSNNQNNDNN) show a composition bias toward low complexity. Basic and acidic residues predominate over residues 457–470 (DQGDDHNSQREGMS).

Belongs to the plant 'ANKYRIN-BTB/POZ' family. 'NOOT-BOP-COCH-like' (NBCL) subfamily. As to quaternary structure, homodimer or heterodimer with BOP1. Interacts with PAN. In terms of tissue distribution, highly expressed in young floral meristem. Predominantly expressed in the boundary between floral meristem (FM) and sepal primordia.

The protein localises to the cytoplasm. The protein resides in the nucleus. Its pathway is protein modification; protein ubiquitination. Functionally, may act as a substrate-specific adapter of an E3 ubiquitin-protein ligase complex (CUL3-RBX1-BTB) which mediates the ubiquitination and subsequent proteasomal degradation of target proteins. Acts redundantly with BOP2. BOP1/2 promote leaf and floral meristem fate and determinacy in a pathway targeting AP1 and AGL24. BOP1/2 act as transcriptional co-regulators through direct interaction with TGA factors, including PAN, a direct regulator of AP1. Controls lateral organ fate through positive regulation of adaxial-abaxial polarity genes ATHB-14/PHB, YAB1/FIL and YAB3, and through positive regulation of LOB domain-containing genes LOB, LBD6/AS2 and LBD36. Promotes and maintains a developmentally determinate state in leaf cells through the negative regulation of JAG, JGL and class I KNOX genes. Is also involved in nectary development, formation of normal abscission zones (AZs) and suppression of bract formation, probably by regulating the cell wall disorganization. This is Regulatory protein NPR5 from Arabidopsis thaliana (Mouse-ear cress).